The chain runs to 248 residues: Tyrosine recombinase XerD-like (248 aa).

The Core-binding (CB) domain occupies M1–Y72. The region spanning S92–M248 is the Tyr recombinase domain. R213 is an active-site residue. Y245 acts as the O-(3'-phospho-DNA)-tyrosine intermediate in catalysis.

This sequence belongs to the 'phage' integrase family. XerD-like subfamily.

Its subcellular location is the cytoplasm. In terms of biological role, putative tyrosine recombinase. Not involved in the cutting and rejoining of the recombining DNA molecules on dif(SL) site. This Streptococcus equi subsp. zooepidemicus (strain H70) protein is Tyrosine recombinase XerD-like.